A 160-amino-acid polypeptide reads, in one-letter code: uncharacterized protein (160 aa).

The signal sequence occupies residues 1 to 18; the sequence is MELLSLAILSSFFAVANQ.

This is an uncharacterized protein from Caenorhabditis elegans.